The following is a 72-amino-acid chain: MAKEDVIEVEGTVIEPLPNAMFRVELENGHKILAHVSGKIRMNFIRILPGDKVTVELSPYDLTRGRITYRYK.

The S1-like domain occupies 1–72 (MAKEDVIEVE…TRGRITYRYK (72 aa)). Tyr60 bears the Phosphotyrosine mark.

This sequence belongs to the IF-1 family. In terms of assembly, component of the 30S ribosomal translation pre-initiation complex which assembles on the 30S ribosome in the order IF-2 and IF-3, IF-1 and N-formylmethionyl-tRNA(fMet); mRNA recruitment can occur at any time during PIC assembly.

The protein localises to the cytoplasm. One of the essential components for the initiation of protein synthesis. Stabilizes the binding of IF-2 and IF-3 on the 30S subunit to which N-formylmethionyl-tRNA(fMet) subsequently binds. Helps modulate mRNA selection, yielding the 30S pre-initiation complex (PIC). Upon addition of the 50S ribosomal subunit IF-1, IF-2 and IF-3 are released leaving the mature 70S translation initiation complex. In Shouchella clausii (strain KSM-K16) (Alkalihalobacillus clausii), this protein is Translation initiation factor IF-1.